We begin with the raw amino-acid sequence, 923 residues long: Lysosomal acid alpha-glucosidase (923 aa).

A signal peptide spans Met1–Ala17. A propeptide spanning residues Gly18–Gln36 is cleaved from the precursor. N-linked (GlcNAc...) asparagine glycans are attached at residues Asn65, Asn405, and Asn440. The active-site Nucleophile is the Asp455. Glu458 is a catalytic residue. Asp585 acts as the Proton donor in catalysis. N-linked (GlcNAc...) asparagine glycosylation is found at Asn586, Asn621, Asn646, Asn848, Asn908, and Asn912.

It belongs to the glycosyl hydrolase 31 family.

The protein localises to the lysosome. The protein resides in the secreted. The enzyme catalyses Hydrolysis of terminal, non-reducing (1-&gt;4)-linked alpha-D-glucose residues with release of alpha-D-glucose.. Essential for the degradation of glycogen to glucose in lysosomes. Has both alpha-1,4 and alpha-1,6-glucosidase activity. In Tetrahymena pyriformis, this protein is Lysosomal acid alpha-glucosidase.